A 210-amino-acid chain; its full sequence is Isochorismatase domain-containing protein 2 (210 aa).

Serine 7 is modified (phosphoserine).

The protein belongs to the isochorismatase family. In terms of assembly, interacts with CDKN2A.

The protein localises to the cytoplasm. It is found in the nucleus. The chain is Isochorismatase domain-containing protein 2 (Isoc2) from Rattus norvegicus (Rat).